The primary structure comprises 437 residues: Aminopeptidase W (437 aa).

Catalysis depends on residues C70, H361, and N382.

It belongs to the peptidase C1 family.

The protein resides in the cytoplasm. The sequence is that of Aminopeptidase W (pepW) from Lactobacillus delbrueckii subsp. lactis.